A 126-amino-acid chain; its full sequence is MILGVGTDIVYIPRISNLWKKFGIKFLTRVFNQKEIEDSYKYTNFDAQVRHFAKRFAAKEAYVKALGTGFGQSIKMSDIVILNNPYGKPQITVSNSNPIHKIELSISDEKDYAIAFIVIYNANIKL.

Residues Asp-8 and Glu-60 each contribute to the Mg(2+) site.

This sequence belongs to the P-Pant transferase superfamily. AcpS family. The cofactor is Mg(2+).

The protein localises to the cytoplasm. It carries out the reaction apo-[ACP] + CoA = holo-[ACP] + adenosine 3',5'-bisphosphate + H(+). Its function is as follows. Transfers the 4'-phosphopantetheine moiety from coenzyme A to a Ser of acyl-carrier-protein. This chain is Holo-[acyl-carrier-protein] synthase, found in Ehrlichia canis (strain Jake).